The chain runs to 234 residues: UPF0502 protein BTH_II0990 (234 aa).

It belongs to the UPF0502 family.

The sequence is that of UPF0502 protein BTH_II0990 from Burkholderia thailandensis (strain ATCC 700388 / DSM 13276 / CCUG 48851 / CIP 106301 / E264).